The sequence spans 253 residues: Triosephosphate isomerase (253 aa).

12-14 (NWK) is a substrate binding site. The Electrophile role is filled by histidine 100. The active-site Proton acceptor is the glutamate 170. Residues glycine 176, serine 215, and 236 to 237 (GG) contribute to the substrate site.

The protein belongs to the triosephosphate isomerase family. Homodimer.

It is found in the cytoplasm. It carries out the reaction D-glyceraldehyde 3-phosphate = dihydroxyacetone phosphate. Its pathway is carbohydrate biosynthesis; gluconeogenesis. The protein operates within carbohydrate degradation; glycolysis; D-glyceraldehyde 3-phosphate from glycerone phosphate: step 1/1. Its function is as follows. Involved in the gluconeogenesis. Catalyzes stereospecifically the conversion of dihydroxyacetone phosphate (DHAP) to D-glyceraldehyde-3-phosphate (G3P). The sequence is that of Triosephosphate isomerase from Rhodopseudomonas palustris (strain BisA53).